We begin with the raw amino-acid sequence, 400 residues long: Nicotinate phosphoribosyltransferase (400 aa).

Phosphohistidine; by autocatalysis is present on H220.

It belongs to the NAPRTase family. Post-translationally, transiently phosphorylated on a His residue during the reaction cycle. Phosphorylation strongly increases the affinity for substrates and increases the rate of nicotinate D-ribonucleotide production. Dephosphorylation regenerates the low-affinity form of the enzyme, leading to product release.

The catalysed reaction is nicotinate + 5-phospho-alpha-D-ribose 1-diphosphate + ATP + H2O = nicotinate beta-D-ribonucleotide + ADP + phosphate + diphosphate. Its pathway is cofactor biosynthesis; NAD(+) biosynthesis; nicotinate D-ribonucleotide from nicotinate: step 1/1. Its function is as follows. Catalyzes the synthesis of beta-nicotinate D-ribonucleotide from nicotinate and 5-phospho-D-ribose 1-phosphate at the expense of ATP. The polypeptide is Nicotinate phosphoribosyltransferase (Citrobacter koseri (strain ATCC BAA-895 / CDC 4225-83 / SGSC4696)).